The following is a 696-amino-acid chain: Polyribonucleotide nucleotidyltransferase (696 aa).

Mg(2+)-binding residues include Asp-486 and Asp-492. In terms of domain architecture, KH spans 553–612 (PRIIVRNIPKDRIGELIGPGGKNVRGISELTGAELYIEDDGRVTISGSNQESAEKAAKMV). The region spanning 622 to 690 (GKIYEGKVKR…KTGKIDLSRK (69 aa)) is the S1 motif domain.

This sequence belongs to the polyribonucleotide nucleotidyltransferase family. It depends on Mg(2+) as a cofactor.

The protein localises to the cytoplasm. The catalysed reaction is RNA(n+1) + phosphate = RNA(n) + a ribonucleoside 5'-diphosphate. Involved in mRNA degradation. Catalyzes the phosphorolysis of single-stranded polyribonucleotides processively in the 3'- to 5'-direction. The sequence is that of Polyribonucleotide nucleotidyltransferase from Leptospira borgpetersenii serovar Hardjo-bovis (strain JB197).